A 373-amino-acid polypeptide reads, in one-letter code: Gibberellin 3-beta-dioxygenase 2 (373 aa).

A Fe2OG dioxygenase domain is found at 203-304; the sequence is MTATVHLNWY…RVSLGYFLGP (102 aa). Y212 serves as a coordination point for 2-oxoglutarate. Fe cation is bound by residues H227, D229, and H285. 2 residues coordinate 2-oxoglutarate: R295 and S297.

The protein belongs to the iron/ascorbate-dependent oxidoreductase family. It depends on L-ascorbate as a cofactor. Fe(2+) is required as a cofactor. In terms of tissue distribution, highly expressed in elongating leaves. Expressed in unopened flowers. Expressed at low levels in leaf blades, shoots, rachis, stems and young panicles.

The enzyme catalyses gibberellin A20 + 2-oxoglutarate + O2 = gibberellin A1 + succinate + CO2. It participates in plant hormone biosynthesis; gibberellin biosynthesis. Its function is as follows. Catalyzes the 3-beta-hydroxylation of the inactive gibberellin precursors, leading to the formation of bioactive gibberellins. In vitro, converts the precursors GA20, GA5, GA44 and GA9 to the corresponding 3-beta-hydroxylated active products GA1, GA3, GA38 and GA4, respectively. Involved in the production of bioactive GA for vegetative growth and development. Controls the elongation of the vegetative shoot and plant height by the regulation of active gibberellin levels. The protein is Gibberellin 3-beta-dioxygenase 2 of Oryza sativa subsp. japonica (Rice).